A 123-amino-acid polypeptide reads, in one-letter code: Ribosome-binding factor A (123 aa).

The protein belongs to the RbfA family. As to quaternary structure, monomer. Binds 30S ribosomal subunits, but not 50S ribosomal subunits or 70S ribosomes.

The protein localises to the cytoplasm. One of several proteins that assist in the late maturation steps of the functional core of the 30S ribosomal subunit. Associates with free 30S ribosomal subunits (but not with 30S subunits that are part of 70S ribosomes or polysomes). Required for efficient processing of 16S rRNA. May interact with the 5'-terminal helix region of 16S rRNA. This Delftia acidovorans (strain DSM 14801 / SPH-1) protein is Ribosome-binding factor A.